Reading from the N-terminus, the 356-residue chain is Heparan sulfate 2-O-sulfotransferase 1 (356 aa).

Residues 1–11 lie on the Cytoplasmic side of the membrane; sequence MGLLRIMMPPK. Residues 12–28 form a helical; Signal-anchor for type II membrane protein membrane-spanning segment; it reads LQLLAVLTFGVLMLFLE. Residues 24 to 51 adopt a coiled-coil conformation; that stretch reads MLFLENQIQNLEESREKLERAIARHEVR. Over 29–356 the chain is Lumenal; it reads NQIQNLEESR…FYEKIYPKSN (328 aa). Adenosine 3',5'-bisphosphate is bound by residues Lys-83, Thr-84, Ala-85, Ser-86, Thr-87, and Ser-88. 2 N-linked (GlcNAc...) asparagine glycosylation sites follow: Asn-108 and Asn-127. Active-site residues include His-140 and His-142. Residues Arg-164 and Ser-172 each contribute to the adenosine 3',5'-bisphosphate site. Intrachain disulfides connect Cys-201/Cys-209 and Cys-222/Cys-228. Tyr-279, Ser-285, Thr-290, and Lys-293 together coordinate adenosine 3',5'-bisphosphate.

The protein belongs to the sulfotransferase 3 family. As to quaternary structure, homotrimer.

The protein localises to the golgi apparatus membrane. Functionally, catalyzes the transfer of a sulfo group from 3'-phospho-5'-adenylyl sulfate (PAPS) to the 2-OH position of iduronic acid (IdoA) or glucuronic acid (GlcA) within the heparan sulfate (HS) chain and participates in HS biosynthesis. The polypeptide is Heparan sulfate 2-O-sulfotransferase 1 (Xenopus laevis (African clawed frog)).